The primary structure comprises 162 residues: uncharacterized protein (162 aa).

Residues 78 to 154 (KNLVVVDIGA…KAIKNLHYVG (77 aa)) form the PUA domain.

This is an uncharacterized protein from Methanocaldococcus jannaschii (strain ATCC 43067 / DSM 2661 / JAL-1 / JCM 10045 / NBRC 100440) (Methanococcus jannaschii).